Here is a 727-residue protein sequence, read N- to C-terminus: E3 ubiquitin-protein ligase LRSAM1 (727 aa).

LRR repeat units follow at residues 30 to 51 (ADDILDISKCELSEIPFGAFAT), 56 to 77 (QKKVLIVHTNHLTSLLPKSCSL), 82 to 103 (TIKVLDLHENQLTALPDDMGQL), 105 to 126 (VLQVLNVERNQLTHLPRSIGNL), 128 to 150 (QLQTLNVKDNKLKELPDTLGELR), and 151 to 172 (SLRTLDISENEIQRLPQMLAHV). The tract at residues 227 to 248 (GAENTQDSPDGPASRFSREEAE) is disordered. S234 bears the Phosphoserine mark. Coiled-coil stretches lie at residues 241–382 (RFSR…NLRQ) and 469–547 (RQIR…QENY). The region spanning 569–632 (GMERRLVALL…LRRAQDLLAV (64 aa)) is the SAM domain. S604 carries the phosphoserine modification. Short sequence motifs (PTAP motif) lie at residues 653–656 (PTAP) and 665–668 (PSAP). Residues 679–714 (CVVCLEREAQMVFLTCGHVCCCQQCCQPLRTCPLCR) form an RING-type zinc finger.

Interacts with TSG101. Interacts with PHF23. Interacts with FUS. Post-translationally, ubiquitination promoted by PHF23 leads to proteasomal degradation. In terms of tissue distribution, widely expressed.

It localises to the cytoplasm. The enzyme catalyses S-ubiquitinyl-[E2 ubiquitin-conjugating enzyme]-L-cysteine + [acceptor protein]-L-lysine = [E2 ubiquitin-conjugating enzyme]-L-cysteine + N(6)-ubiquitinyl-[acceptor protein]-L-lysine.. It functions in the pathway protein modification; protein ubiquitination. Its function is as follows. E3 ubiquitin-protein ligase that mediates monoubiquitination of TSG101 at multiple sites, leading to inactivate the ability of TSG101 to sort endocytic (EGF receptors) and exocytic (viral proteins) cargos. Bacterial recognition protein that defends the cytoplasm from invasive pathogens. Localizes to several intracellular bacterial pathogens and generates the bacteria-associated ubiquitin signal leading to autophagy-mediated intracellular bacteria degradation (xenophagy). This Mus musculus (Mouse) protein is E3 ubiquitin-protein ligase LRSAM1.